The sequence spans 110 residues: Thiosulfate sulfurtransferase GlpE (110 aa).

In terms of domain architecture, Rhodanese spans 19–107; it reads EDSLAVLVDI…WRRQALPIIQ (89 aa). Residue cysteine 67 is the Cysteine persulfide intermediate of the active site.

It belongs to the GlpE family.

The protein localises to the cytoplasm. It catalyses the reaction thiosulfate + hydrogen cyanide = thiocyanate + sulfite + 2 H(+). The enzyme catalyses thiosulfate + [thioredoxin]-dithiol = [thioredoxin]-disulfide + hydrogen sulfide + sulfite + 2 H(+). Its function is as follows. Transferase that catalyzes the transfer of sulfur from thiosulfate to thiophilic acceptors such as cyanide or dithiols. May function in a CysM-independent thiosulfate assimilation pathway by catalyzing the conversion of thiosulfate to sulfite, which can then be used for L-cysteine biosynthesis. The chain is Thiosulfate sulfurtransferase GlpE from Photobacterium profundum (strain SS9).